A 589-amino-acid polypeptide reads, in one-letter code: Aspartate--tRNA ligase (589 aa).

E172 contacts L-aspartate. The segment at 196 to 199 is aspartate; the sequence is QLFK. R218 is an L-aspartate binding site. ATP is bound by residues 218–220 and Q227; that span reads RDE. H449 is a binding site for L-aspartate. Position 483 (E483) interacts with ATP. An L-aspartate-binding site is contributed by R490. 535–538 is a binding site for ATP; that stretch reads GLDR.

The protein belongs to the class-II aminoacyl-tRNA synthetase family. Type 1 subfamily. In terms of assembly, homodimer.

Its subcellular location is the cytoplasm. The enzyme catalyses tRNA(Asp) + L-aspartate + ATP = L-aspartyl-tRNA(Asp) + AMP + diphosphate. Catalyzes the attachment of L-aspartate to tRNA(Asp) in a two-step reaction: L-aspartate is first activated by ATP to form Asp-AMP and then transferred to the acceptor end of tRNA(Asp). The chain is Aspartate--tRNA ligase from Haemophilus ducreyi (strain 35000HP / ATCC 700724).